A 149-amino-acid polypeptide reads, in one-letter code: 3-dehydroquinate dehydratase (149 aa).

The active-site Proton acceptor is the Tyr26. Positions 77, 83, and 90 each coordinate substrate. The active-site Proton donor is His103. Substrate contacts are provided by residues Leu104 to Ser105 and Arg114.

Belongs to the type-II 3-dehydroquinase family. As to quaternary structure, homododecamer.

The enzyme catalyses 3-dehydroquinate = 3-dehydroshikimate + H2O. It participates in metabolic intermediate biosynthesis; chorismate biosynthesis; chorismate from D-erythrose 4-phosphate and phosphoenolpyruvate: step 3/7. Its function is as follows. Catalyzes a trans-dehydration via an enolate intermediate. The sequence is that of 3-dehydroquinate dehydratase from Haemophilus influenzae (strain PittGG).